The chain runs to 505 residues: DEAD-box ATP-dependent RNA helicase 41 (505 aa).

An HIT-type zinc finger spans residues 27 to 56 (GEPKCVICSRYGEYICDETNDDVCSLECKQ). Residues 110-138 (LTFTSCGLPPKLLLNLETAGYDFPTPIQM) carry the Q motif motif. A Helicase ATP-binding domain is found at 141 to 318 (IPAALTGKSL…GSLAKEIILV (178 aa)). 154-161 (ADTGSGKT) is a binding site for ATP. The DEAD box motif lies at 267 to 270 (DEVD). A Helicase C-terminal domain is found at 342–492 (KKQKLFDILR…AIPKELINLT (151 aa)).

The protein belongs to the DEAD box helicase family. DDX59 subfamily.

It carries out the reaction ATP + H2O = ADP + phosphate + H(+). The sequence is that of DEAD-box ATP-dependent RNA helicase 41 (RH41) from Arabidopsis thaliana (Mouse-ear cress).